The primary structure comprises 430 residues: Carbamoyl phosphate synthase arginine-specific small chain (430 aa).

The transit peptide at 1 to 9 directs the protein to the mitochondrion; sequence MLSATKRYL. In terms of domain architecture, Glutamine amidotransferase type-1 spans 219-407; that stretch reads HIAVLDCGAK…FDNINVYKKS (189 aa). Cys296 serves as the catalytic Nucleophile. Residues His380 and Glu382 contribute to the active site.

Belongs to the CarA family. In terms of assembly, heterodimer composed of 2 chains; the small (or glutamine) chain promotes the hydrolysis of glutamine to ammonia, which is used by the large (or ammonia) chain to synthesize carbamoyl phosphate.

It is found in the mitochondrion matrix. The enzyme catalyses hydrogencarbonate + L-glutamine + 2 ATP + H2O = carbamoyl phosphate + L-glutamate + 2 ADP + phosphate + 2 H(+). The catalysed reaction is L-glutamine + H2O = L-glutamate + NH4(+). It participates in amino-acid biosynthesis; L-arginine biosynthesis; carbamoyl phosphate from bicarbonate: step 1/1. Its function is as follows. Small subunit of the arginine-specific carbamoyl phosphate synthase (CPSase). CPSase catalyzes the formation of carbamoyl phosphate from the ammonia moiety of glutamine, carbonate, and phosphate donated by ATP, the first step of the arginine biosynthetic pathway. The small subunit (glutamine amidotransferase) binds and cleaves glutamine to supply the large subunit with the substrate ammonia. This Candida albicans (strain SC5314 / ATCC MYA-2876) (Yeast) protein is Carbamoyl phosphate synthase arginine-specific small chain (CPA1).